Reading from the N-terminus, the 289-residue chain is NAD kinase (289 aa).

The active-site Proton acceptor is D68. NAD(+) is bound by residues 68–69 (DG), K73, 142–143 (ND), R153, D172, 183–188 (TAYSLS), and Q243.

The protein belongs to the NAD kinase family. A divalent metal cation is required as a cofactor.

The protein localises to the cytoplasm. It carries out the reaction NAD(+) + ATP = ADP + NADP(+) + H(+). Its function is as follows. Involved in the regulation of the intracellular balance of NAD and NADP, and is a key enzyme in the biosynthesis of NADP. Catalyzes specifically the phosphorylation on 2'-hydroxyl of the adenosine moiety of NAD to yield NADP. This chain is NAD kinase, found in Acetivibrio thermocellus (strain ATCC 27405 / DSM 1237 / JCM 9322 / NBRC 103400 / NCIMB 10682 / NRRL B-4536 / VPI 7372) (Clostridium thermocellum).